Reading from the N-terminus, the 532-residue chain is uncharacterized protein (532 aa).

The next 5 membrane-spanning stretches (helical) occupy residues 11–31, 51–71, 126–146, 147–167, and 231–253; these read YLSH…ALII, IEPF…KIFF, LIDI…YTLW, ILYN…IIVF, and YVES…VLLI. Residues 315–531 form the ABC transporter domain; it reads ICINKLVYEY…MIIPMNNGII (217 aa). Residue 349–356 coordinates ATP; sequence GKSGSGKS.

Its subcellular location is the membrane. This is an uncharacterized protein from Acanthamoeba polyphaga mimivirus (APMV).